We begin with the raw amino-acid sequence, 485 residues long: Chromosomal replication initiator protein DnaA (485 aa).

The segment at 1–74 (MEKSKNIWSL…ILTNNGYDNV (74 aa)) is domain I, interacts with DnaA modulators. Residues 74–140 (VTIVFTNQSP…EEEPKNFKNP (67 aa)) are domain II. The tract at residues 141 to 357 (FLKKRYTFEN…AAVTKLKAYI (217 aa)) is domain III, AAA+ region. ATP-binding residues include G185, G187, K188, and T189. The interval 358-485 (DLDNIEIDID…TELMNKIKKN (128 aa)) is domain IV, binds dsDNA.

It belongs to the DnaA family. As to quaternary structure, oligomerizes as a right-handed, spiral filament on DNA at oriC.

It is found in the cytoplasm. Plays an essential role in the initiation and regulation of chromosomal replication. ATP-DnaA binds to the origin of replication (oriC) to initiate formation of the DNA replication initiation complex once per cell cycle. Binds the DnaA box (a 9 base pair repeat at the origin) and separates the double-stranded (ds)DNA. Forms a right-handed helical filament on oriC DNA; dsDNA binds to the exterior of the filament while single-stranded (ss)DNA is stabiized in the filament's interior. The ATP-DnaA-oriC complex binds and stabilizes one strand of the AT-rich DNA unwinding element (DUE), permitting loading of DNA polymerase. After initiation quickly degrades to an ADP-DnaA complex that is not apt for DNA replication. Binds acidic phospholipids. In Borreliella afzelii (strain PKo) (Borrelia afzelii), this protein is Chromosomal replication initiator protein DnaA.